A 330-amino-acid polypeptide reads, in one-letter code: tRNA U34 carboxymethyltransferase (330 aa).

Carboxy-S-adenosyl-L-methionine contacts are provided by residues K91, W105, K110, G130, 152–154 (DPS), 181–182 (IE), M196, Y200, and R315.

This sequence belongs to the class I-like SAM-binding methyltransferase superfamily. CmoB family. Homotetramer.

The enzyme catalyses carboxy-S-adenosyl-L-methionine + 5-hydroxyuridine(34) in tRNA = 5-carboxymethoxyuridine(34) in tRNA + S-adenosyl-L-homocysteine + H(+). Its function is as follows. Catalyzes carboxymethyl transfer from carboxy-S-adenosyl-L-methionine (Cx-SAM) to 5-hydroxyuridine (ho5U) to form 5-carboxymethoxyuridine (cmo5U) at position 34 in tRNAs. This is tRNA U34 carboxymethyltransferase from Shewanella sediminis (strain HAW-EB3).